The primary structure comprises 529 residues: Structure-specific endonuclease subunit SLX1 homolog 1 (529 aa).

A GIY-YIG domain is found at 4-89 (RFHCVYLLTS…PTKSTRLKTQ (86 aa)). The SLX1-type zinc finger occupies 231 to 364 (CALCSLPLRS…PCQPCPCPLC (134 aa)). 3 disordered regions span residues 275–305 (VTMGQSTRNERSGEYSNKIKDDSNDGTMDAH), 409–437 (NSSLTERKSRRKATPALGQKRNRGEYCGD), and 470–501 (SVSLPPSRDEGYACDSSRRGVGGSKHTTRMTD). Over residues 282 to 297 (RNERSGEYSNKIKDDS) the composition is skewed to basic and acidic residues.

This sequence belongs to the SLX1 family. Forms a heterodimer with a member of the SLX4 family. A divalent metal cation serves as cofactor.

It is found in the nucleus. Its function is as follows. Catalytic subunit of a heterodimeric structure-specific endonuclease that resolves DNA secondary structures generated during DNA repair and recombination. Has endonuclease activity towards branched DNA substrates, introducing single-strand cuts in duplex DNA close to junctions with ss-DNA. This is Structure-specific endonuclease subunit SLX1 homolog 1 from Trypanosoma cruzi (strain CL Brener).